The following is a 215-amino-acid chain: Large ribosomal subunit protein uL4c (215 aa).

Residues 51–87 (QKQGTVSTKTRSEVRGGGKKPWRQKGTGRARAGSSRS) form a disordered region. Residues 67 to 78 (GGKKPWRQKGTG) show a composition bias toward basic residues.

This sequence belongs to the universal ribosomal protein uL4 family. In terms of assembly, part of the 50S ribosomal subunit.

The protein resides in the plastid. Its subcellular location is the chloroplast. In terms of biological role, probably binds the 23S rRNA. This chain is Large ribosomal subunit protein uL4c (rpl4), found in Thalassiosira pseudonana (Marine diatom).